A 428-amino-acid polypeptide reads, in one-letter code: C4-dicarboxylate transport protein (428 aa).

8 helical membrane passes run 8–28 (SLYF…HFYP), 44–64 (LIKM…IAGM), 76–96 (VALL…LIIV), 142–162 (IGAF…LFGF), 184–204 (VIFG…FGAM), 222–242 (LIIC…GSIA), 326–346 (IVHQ…AAGV), and 352–372 (IVLA…LALI).

Belongs to the dicarboxylate/amino acid:cation symporter (DAACS) (TC 2.A.23) family.

The protein localises to the cell inner membrane. Responsible for the transport of dicarboxylates such as succinate, fumarate, and malate from the periplasm across the membrane. This chain is C4-dicarboxylate transport protein, found in Shigella dysenteriae serotype 1 (strain Sd197).